Reading from the N-terminus, the 258-residue chain is Ubiquinone/menaquinone biosynthesis C-methyltransferase UbiE (258 aa).

S-adenosyl-L-methionine contacts are provided by residues Thr-81, Asp-102, and 130–131 (NA).

This sequence belongs to the class I-like SAM-binding methyltransferase superfamily. MenG/UbiE family.

The catalysed reaction is a 2-demethylmenaquinol + S-adenosyl-L-methionine = a menaquinol + S-adenosyl-L-homocysteine + H(+). It carries out the reaction a 2-methoxy-6-(all-trans-polyprenyl)benzene-1,4-diol + S-adenosyl-L-methionine = a 5-methoxy-2-methyl-3-(all-trans-polyprenyl)benzene-1,4-diol + S-adenosyl-L-homocysteine + H(+). It functions in the pathway quinol/quinone metabolism; menaquinone biosynthesis; menaquinol from 1,4-dihydroxy-2-naphthoate: step 2/2. It participates in cofactor biosynthesis; ubiquinone biosynthesis. Functionally, methyltransferase required for the conversion of demethylmenaquinol (DMKH2) to menaquinol (MKH2) and the conversion of 2-polyprenyl-6-methoxy-1,4-benzoquinol (DDMQH2) to 2-polyprenyl-3-methyl-6-methoxy-1,4-benzoquinol (DMQH2). The protein is Ubiquinone/menaquinone biosynthesis C-methyltransferase UbiE of Allorhizobium ampelinum (strain ATCC BAA-846 / DSM 112012 / S4) (Agrobacterium vitis (strain S4)).